The following is a 129-amino-acid chain: Small ribosomal subunit protein uS11 (129 aa).

The protein belongs to the universal ribosomal protein uS11 family. Part of the 30S ribosomal subunit. Interacts with proteins S7 and S18. Binds to IF-3.

Its function is as follows. Located on the platform of the 30S subunit, it bridges several disparate RNA helices of the 16S rRNA. Forms part of the Shine-Dalgarno cleft in the 70S ribosome. The protein is Small ribosomal subunit protein uS11 of Geobacillus sp. (strain WCH70).